A 341-amino-acid chain; its full sequence is DnaJ homolog subfamily C member 22 (341 aa).

Positions 3 to 50 (KGLLVTYALWAVGGPAGLHHLYLGRDSHALLWMLTLGGGGLGWLWEFW) constitute a TM2 domain. 7 helical membrane passes run 5-25 (LLVTYALWAVGGPAGLHHLYL), 30-50 (HALLWMLTLGGGGLGWLWEFW), 81-101 (FAAQVIVGIYFGLVALISLSS), 105-125 (FYIVALPLAVGLGVLLVAAVG), 135-155 (LGAAFLTSPIFYGRPIAILPI), 185-205 (LGLAYLAFTGPLAYSALCNTA), and 218-238 (FLNWFSFFPLLGRLMEFVLLL). The 65-residue stretch at 277 to 341 (LAYQVLGLSE…QPRKPRGSRR (65 aa)) folds into the J domain.

It localises to the membrane. Its function is as follows. May function as a co-chaperone. The protein is DnaJ homolog subfamily C member 22 (DNAJC22) of Pongo abelii (Sumatran orangutan).